We begin with the raw amino-acid sequence, 387 residues long: Alkanesulfonate monooxygenase (387 aa).

It belongs to the SsuD family.

The enzyme catalyses an alkanesulfonate + FMNH2 + O2 = an aldehyde + FMN + sulfite + H2O + 2 H(+). Its function is as follows. Catalyzes the desulfonation of aliphatic sulfonates. This chain is Alkanesulfonate monooxygenase, found in Cupriavidus necator (strain ATCC 17699 / DSM 428 / KCTC 22496 / NCIMB 10442 / H16 / Stanier 337) (Ralstonia eutropha).